Reading from the N-terminus, the 628-residue chain is Beta-lactamase-like protein 1 (628 aa).

The N-terminal stretch at 1–28 is a signal peptide; it reads MKNILSFSFSFSFLYILFLLLFLNNNLL. 4 N-linked (GlcNAc...) asparagine glycosylation sites follow: asparagine 45, asparagine 68, asparagine 198, and asparagine 241. The segment covering 245–281 has biased composition (low complexity); that stretch reads NNNNNNNNNNNNNNNNNNNNNNNNNNNNNNNNNNNNN. A disordered region spans residues 245 to 285; it reads NNNNNNNNNNNNNNNNNNNNNNNNNNNNNNNNNNNNNKIKT. Asparagine 313 and asparagine 335 each carry an N-linked (GlcNAc...) asparagine glycan. The disordered stretch occupies residues 494–516; sequence EKEEKEEEEENQQDESQQQQQQQ. Positions 496 to 506 are enriched in acidic residues; the sequence is EEKEEEEENQQ. Residues 507–516 show a composition bias toward low complexity; it reads DESQQQQQQQ.

It belongs to the beta-lactamase family.

Its subcellular location is the secreted. This Dictyostelium discoideum (Social amoeba) protein is Beta-lactamase-like protein 1.